The primary structure comprises 614 residues: UPF0329 protein ECU03_0090 (614 aa).

2 stretches are compositionally biased toward basic and acidic residues: residues 317–338 (EREE…EESL) and 345–354 (LRMEEKEKSK). Positions 317-420 (EREEAEKMRG…KKSRSKGHRY (104 aa)) are disordered. A compositionally biased stretch (basic residues) spans 355–364 (SRGKKKKGGK). Basic and acidic residues predominate over residues 372–381 (AKMEEEKKDS). Acidic residues predominate over residues 382–394 (EEVEESAEAEVSL). The segment covering 408–420 (SSKKKSRSKGHRY) has biased composition (basic residues).

The protein belongs to the UPF0329 family.

This Encephalitozoon cuniculi (strain GB-M1) (Microsporidian parasite) protein is UPF0329 protein ECU03_0090.